Reading from the N-terminus, the 203-residue chain is Holliday junction branch migration complex subunit RuvA (203 aa).

Residues 1–61 form a domain I region; the sequence is MIIYKYGKIM…EYTKVTYGFD (61 aa). The tract at residues 62-139 is domain II; it reads NFKELVIFED…KFMKKLTSDE (78 aa). The flexible linker stretch occupies residues 140 to 147; it reads AAKIKVPA. The tract at residues 147 to 203 is domain III; sequence ASSENENKFLDTMKMLGFKQQQIKFALDKIELNDDIETCVENAIKLISQQQHETSRV.

The protein belongs to the RuvA family. As to quaternary structure, homotetramer. Forms an RuvA(8)-RuvB(12)-Holliday junction (HJ) complex. HJ DNA is sandwiched between 2 RuvA tetramers; dsDNA enters through RuvA and exits via RuvB. An RuvB hexamer assembles on each DNA strand where it exits the tetramer. Each RuvB hexamer is contacted by two RuvA subunits (via domain III) on 2 adjacent RuvB subunits; this complex drives branch migration. In the full resolvosome a probable DNA-RuvA(4)-RuvB(12)-RuvC(2) complex forms which resolves the HJ.

The protein resides in the cytoplasm. The RuvA-RuvB-RuvC complex processes Holliday junction (HJ) DNA during genetic recombination and DNA repair, while the RuvA-RuvB complex plays an important role in the rescue of blocked DNA replication forks via replication fork reversal (RFR). RuvA specifically binds to HJ cruciform DNA, conferring on it an open structure. The RuvB hexamer acts as an ATP-dependent pump, pulling dsDNA into and through the RuvAB complex. HJ branch migration allows RuvC to scan DNA until it finds its consensus sequence, where it cleaves and resolves the cruciform DNA. The polypeptide is Holliday junction branch migration complex subunit RuvA (Metamycoplasma arthritidis (strain 158L3-1) (Mycoplasma arthritidis)).